The following is a 712-amino-acid chain: MHRTLLFLTWLISLTKAFNIKLPHTEKKDHLESNAVLACASYINTLKWSFDSSVVPGFYSTICSYSPAFDTWSLCIFNSLTDQIIPMDNTSFEESLGNVRKTCSFVDKKFSNISLEQYYSSLNNASSHALEDYGSIESLSTSIRVDRETRSRWIRAFHAHAYNLDISSVYGAYLTYYFVIVGIIAVFFHMSHYNGLNRALFASRFVNYIRGHFVLPTFLVDKHANHFKFLNVEVFTGLMPNSLEAWIIFGYTLANIIFLSISYIIDPYNLIFNSHLSQFTRLLADRSGILAFTQFPLIIIFTARNSFLEFLTGVKFNSFISFHKWIGRIMVLNATIHSLSYSLFAIINHAFKISNKQLYWKFGIASITVLCVLLVLSLGIVRKRHYEFFLYTHIILALLFFYCCWQHVKIFNGWKEWIVVSLLIWGLEKLFRIWNILQFRFPKATLINLNTSNNPHDEMFKVIIPKYNRRWHSKPGQYCFIYFLHPLVFWQCHPFTIIDEGEKCVLVIKPKSGLTRFIYNHILQSLNGKLQLRVAIEGPYGPSNLHLDKFDHLLLLSGGTGLPGPLDHAIKLSRNPDKPKSIDLIMAIKNPSFLNGYKSEILELKNSRSHVNVQVYLTQKTAVTKAANARDQLIHFDDIMTELTSFAHIGNARPNFSNVIENAIKSTPPGDSLAVVCCGPPVLVDDVRNTVSQKLLGYPERIIEYFEEYQCW.

The N-terminal stretch at 1-17 is a signal peptide; the sequence is MHRTLLFLTWLISLTKA. The Vacuolar portion of the chain corresponds to 18-167; the sequence is FNIKLPHTEK…HAHAYNLDIS (150 aa). 3 N-linked (GlcNAc...) asparagine glycosylation sites follow: Asn89, Asn112, and Asn124. A helical membrane pass occupies residues 168–188; the sequence is SVYGAYLTYYFVIVGIIAVFF. At 189 to 244 the chain is on the cytoplasmic side; sequence HMSHYNGLNRALFASRFVNYIRGHFVLPTFLVDKHANHFKFLNVEVFTGLMPNSLE. The helical transmembrane segment at 245 to 265 threads the bilayer; it reads AWIIFGYTLANIIFLSISYII. The Vacuolar segment spans residues 266 to 287; that stretch reads DPYNLIFNSHLSQFTRLLADRS. A Ferric oxidoreductase domain is found at 287–411; sequence SGILAFTQFP…YCCWQHVKIF (125 aa). Residues 288–308 form a helical membrane-spanning segment; sequence GILAFTQFPLIIIFTARNSFL. Over 309–328 the chain is Cytoplasmic; sequence EFLTGVKFNSFISFHKWIGR. Residues His323 and His337 each coordinate heme. Residues 329-349 form a helical membrane-spanning segment; the sequence is IMVLNATIHSLSYSLFAIINH. The Vacuolar segment spans residues 350 to 360; that stretch reads AFKISNKQLYW. Residues 361 to 381 form a helical membrane-spanning segment; sequence KFGIASITVLCVLLVLSLGIV. Over 382-387 the chain is Cytoplasmic; that stretch reads RKRHYE. The helical transmembrane segment at 388–408 threads the bilayer; that stretch reads FFLYTHIILALLFFYCCWQHV. 2 residues coordinate heme: His393 and His407. The Vacuolar segment spans residues 409–416; the sequence is KIFNGWKE. The region spanning 412-546 is the FAD-binding FR-type domain; it reads NGWKEWIVVS…EGPYGPSNLH (135 aa). Residues 417–437 form a helical membrane-spanning segment; that stretch reads WIVVSLLIWGLEKLFRIWNIL. At 438–712 the chain is on the cytoplasmic side; sequence QFRFPKATLI…IEYFEEYQCW (275 aa). 493 to 499 serves as a coordination point for FAD; the sequence is HPFTIID. NADP(+)-binding positions include 538–541 and 678–679; these read GPYG and CG.

It belongs to the ferric reductase (FRE) family. The cofactor is FAD.

Its subcellular location is the vacuole membrane. It catalyses the reaction 2 a Fe(II)-siderophore + NADP(+) + H(+) = 2 a Fe(III)-siderophore + NADPH. Its function is as follows. Metalloreductase responsible for reducing vacuolar iron and copper prior to transport into the cytosol. Catalyzes the reduction of Fe(3+) to Fe(2+) and Cu(2+) to Cu(+), respectively, which can then be transported by the respective vacuolar efflux systems to the cytosol. This Saccharomyces cerevisiae (strain ATCC 204508 / S288c) (Baker's yeast) protein is Ferric reductase transmembrane component 6 (FRE6).